The following is a 389-amino-acid chain: Inner membrane transport protein YdhP (389 aa).

At 1 to 6 (MKINYP) the chain is on the cytoplasmic side. The chain crosses the membrane as a helical span at residues 7 to 27 (LLALAIGAFGIGTTEFSPMGL). Over 28–43 (LPVIARGVDVSIPAAG) the chain is Periplasmic. A helical membrane pass occupies residues 44 to 64 (MLISAYAVGVMVGAPLMTLLL). At 65 to 70 (SHRARR) the chain is on the cytoplasmic side. A helical transmembrane segment spans residues 71–91 (SALIFLMAIFTLGNVLSAIAP). The Periplasmic segment spans residues 92-100 (DYMTLMLSR). The chain crosses the membrane as a helical span at residues 101–121 (ILTSLNHGAFFGLGSVVAASV). The Cytoplasmic portion of the chain corresponds to 122–130 (VPKHKQASA). Residues 131–151 (VATMFMGLTLANIGGVPAATW) traverse the membrane as a helical segment. Topologically, residues 152-159 (LGETIGWR) are periplasmic. The chain crosses the membrane as a helical span at residues 160–180 (MSFLATAGLGVISMVSLFFSL). Residues 181–203 (PKGGAGARPEVKKELAVLMRPQV) are Cytoplasmic-facing. A helical transmembrane segment spans residues 204–224 (LSALLTTVLGAGAMFTLYTYI). The Periplasmic segment spans residues 225–236 (SPVLQSITHATP). A helical transmembrane segment spans residues 237 to 257 (VFVTAMLVLIGVGFSIGNYLG). The Cytoplasmic segment spans residues 258-266 (GKLADRSVN). A helical membrane pass occupies residues 267-287 (GTLKGFLLLLMVIMLAIPFLA). Residues 288–290 (RNK) lie on the Periplasmic side of the membrane. Residues 291–311 (FGAAISMAVWGAATFAVVPPL) traverse the membrane as a helical segment. Over 312–330 (QMRVMRVASEAPGLSSSVN) the chain is Cytoplasmic. Residues 331–351 (IGAFNLGNALGAAAGGAVISA) traverse the membrane as a helical segment. At 352 to 356 (GLGYS) the chain is on the periplasmic side. The helical transmembrane segment at 357-377 (FVPVMGAIVAGLALLLVFMSA) threads the bilayer. Topologically, residues 378-389 (RKQPETVCVANS) are cytoplasmic.

This sequence belongs to the major facilitator superfamily.

The protein localises to the cell inner membrane. The chain is Inner membrane transport protein YdhP (ydhP) from Escherichia coli O157:H7.